Reading from the N-terminus, the 77-residue chain is U8-lycotoxin-Ls1r (77 aa).

The signal sequence occupies residues 1–20 (MKLIIFTGLVLFAIVSLIEA). Residues 21–26 (QAENEK) constitute a propeptide that is removed on maturation.

Belongs to the neurotoxin 19 (CSTX) family. 08 (U8-Lctx) subfamily. In terms of processing, contains 4 disulfide bonds. As to expression, expressed by the venom gland.

It localises to the secreted. The protein is U8-lycotoxin-Ls1r of Lycosa singoriensis (Wolf spider).